Reading from the N-terminus, the 466-residue chain is A-type ATP synthase subunit B (466 aa).

This sequence belongs to the ATPase alpha/beta chains family. Has multiple subunits with at least A(3), B(3), C, D, E, F, H, I and proteolipid K(x).

It is found in the cell membrane. In terms of biological role, component of the A-type ATP synthase that produces ATP from ADP in the presence of a proton gradient across the membrane. The B chain is a regulatory subunit. The protein is A-type ATP synthase subunit B of Sulfolobus acidocaldarius (strain ATCC 33909 / DSM 639 / JCM 8929 / NBRC 15157 / NCIMB 11770).